The following is an 82-amino-acid chain: MVGSGAPQRGSAAATASMRRRKPTSGAGGGGASGGAAGSMLQFYTDDAPGLKISPNVVLIMSIGFIAFVAVLHVMGKLYFVK.

An N-acetylmethionine modification is found at Met1. The disordered stretch occupies residues 1-34 (MVGSGAPQRGSAAATASMRRRKPTSGAGGGGASG). Topologically, residues 1 to 55 (MVGSGAPQRGSAAATASMRRRKPTSGAGGGGASGGAAGSMLQFYTDDAPGLKISP) are cytoplasmic. The helical transmembrane segment at 56–76 (NVVLIMSIGFIAFVAVLHVMG) threads the bilayer.

This sequence belongs to the SEC61-beta family. In terms of assembly, heterotrimeric complex composed of SEC61-alpha, SEC61-beta and SEC61-gamma.

It localises to the endoplasmic reticulum membrane. Its function is as follows. Necessary for protein translocation in the endoplasmic reticulum. This Arabidopsis thaliana (Mouse-ear cress) protein is Protein transport protein Sec61 subunit beta.